A 150-amino-acid polypeptide reads, in one-letter code: D-aminoacyl-tRNA deacylase (150 aa).

Positions 140–141 match the Gly-cisPro motif, important for rejection of L-amino acids motif; sequence GP.

The protein belongs to the DTD family. Homodimer.

Its subcellular location is the cytoplasm. The catalysed reaction is glycyl-tRNA(Ala) + H2O = tRNA(Ala) + glycine + H(+). It catalyses the reaction a D-aminoacyl-tRNA + H2O = a tRNA + a D-alpha-amino acid + H(+). Its function is as follows. An aminoacyl-tRNA editing enzyme that deacylates mischarged D-aminoacyl-tRNAs. Also deacylates mischarged glycyl-tRNA(Ala), protecting cells against glycine mischarging by AlaRS. Acts via tRNA-based rather than protein-based catalysis; rejects L-amino acids rather than detecting D-amino acids in the active site. By recycling D-aminoacyl-tRNA to D-amino acids and free tRNA molecules, this enzyme counteracts the toxicity associated with the formation of D-aminoacyl-tRNA entities in vivo and helps enforce protein L-homochirality. The chain is D-aminoacyl-tRNA deacylase (DTD1) from Kluyveromyces lactis (strain ATCC 8585 / CBS 2359 / DSM 70799 / NBRC 1267 / NRRL Y-1140 / WM37) (Yeast).